A 94-amino-acid polypeptide reads, in one-letter code: uncharacterized protein (94 aa).

This is an uncharacterized protein from Archaeoglobus fulgidus (strain ATCC 49558 / DSM 4304 / JCM 9628 / NBRC 100126 / VC-16).